We begin with the raw amino-acid sequence, 655 residues long: Carboxypeptidase S1 homolog B (655 aa).

The signal sequence occupies residues 1 to 21; it reads MRPFARAALCLLAAAGHLAQA. The cysteines at positions 51 and 123 are disulfide-linked. N-linked (GlcNAc...) asparagine glycans are attached at residues asparagine 130, asparagine 163, and asparagine 186. Serine 240 is a catalytic residue. Residues asparagine 266, asparagine 302, and asparagine 311 are each glycosylated (N-linked (GlcNAc...) asparagine). 2 cysteine pairs are disulfide-bonded: cysteine 328/cysteine 364 and cysteine 335/cysteine 357. Asparagine 414 carries N-linked (GlcNAc...) asparagine glycosylation. Aspartate 459 is a catalytic residue. Cysteine 462 contacts substrate. N-linked (GlcNAc...) asparagine glycosylation is found at asparagine 475, asparagine 493, and asparagine 506. The active site involves histidine 517. Residue glutamate 518 coordinates substrate. N-linked (GlcNAc...) asparagine glycans are attached at residues asparagine 598 and asparagine 612. Residue glycine 631 is the site of GPI-anchor amidated glycine attachment. A propeptide spans 632–655 (removed in mature form); sequence AALVSGRIKFHVHVIKSFDYYIFI.

Belongs to the peptidase S10 family.

It localises to the cell membrane. The catalysed reaction is Preferential release of a C-terminal arginine or lysine residue.. Functionally, extracellular serine carboxypeptidase that contributes to pathogenicity. This Arthroderma otae (strain ATCC MYA-4605 / CBS 113480) (Microsporum canis) protein is Carboxypeptidase S1 homolog B (SCPB).